Reading from the N-terminus, the 634-residue chain is DNA-directed RNA polymerase subunit gamma (634 aa).

4 residues coordinate Zn(2+): C74, C76, C89, and C92. Residues D471, D473, and D475 each contribute to the Mg(2+) site.

It belongs to the RNA polymerase beta' chain family. RpoC1 subfamily. In terms of assembly, in cyanobacteria the RNAP catalytic core is composed of 2 alpha, 1 beta, 1 beta', 1 gamma and 1 omega subunit. When a sigma factor is associated with the core the holoenzyme is formed, which can initiate transcription. Requires Mg(2+) as cofactor. It depends on Zn(2+) as a cofactor.

The catalysed reaction is RNA(n) + a ribonucleoside 5'-triphosphate = RNA(n+1) + diphosphate. DNA-dependent RNA polymerase catalyzes the transcription of DNA into RNA using the four ribonucleoside triphosphates as substrates. In Synechococcus sp. (strain CC9311), this protein is DNA-directed RNA polymerase subunit gamma.